The sequence spans 310 residues: Transcriptional activator BRRF1 (310 aa).

This sequence belongs to the lymphocryptovirus BBRF1 family.

Its function is as follows. Enhances the ability of BRLF1 to induce lytic infection by cooperating with it to transcriptionally activate the BZLF1 promoter. This Epstein-Barr virus (strain AG876) (HHV-4) protein is Transcriptional activator BRRF1.